A 449-amino-acid chain; its full sequence is Keratin, type I cytoskeletal 27 (449 aa).

A head region spans residues 1 to 73; that stretch reads MSVRFSSASR…VNEHGLLSGN (73 aa). A coil 1A region spans residues 74–109; it reads EKVTMQNLNDRLASYLENVQALEEANADLEQKIKDW. The IF rod domain occupies 74–389; that stretch reads EKVTMQNLND…LLIGGDEGSC (316 aa). The segment at 110-131 is linker 1; that stretch reads YEKFGPGSCRGLDHDYSRYFPI. The segment at 132 to 223 is coil 1B; the sequence is IDDLRTQIIS…KNHEEEMQAL (92 aa). Residues 224–246 form a linker 12 region; sequence QCAAGGNVNVEMNAAPGVDLTVL. Positions 247–385 are coil 2; the sequence is LNNMRAEYEA…ETYCLLIGGD (139 aa). The segment at 386–449 is tail; it reads EGSCVKSKGQ…NNKNEQRIPS (64 aa). Residues 425 to 449 are disordered; it reads LSSRVHTLEEKSTKVNNKNEQRIPS. The segment covering 430–449 has biased composition (basic and acidic residues); it reads HTLEEKSTKVNNKNEQRIPS.

It belongs to the intermediate filament family. In terms of assembly, heterotetramer of two type I and two type II keratins. Interacts with KRT6A to form filaments.

The protein localises to the cytoplasm. Essential for the proper assembly of type I and type II keratin protein complexes and formation of keratin intermediate filaments in the inner root sheath (irs). The sequence is that of Keratin, type I cytoskeletal 27 from Rattus norvegicus (Rat).